Here is a 119-residue protein sequence, read N- to C-terminus: Large ribosomal subunit protein uL24 (119 aa).

Belongs to the universal ribosomal protein uL24 family. As to quaternary structure, part of the 50S ribosomal subunit.

One of two assembly initiator proteins, it binds directly to the 5'-end of the 23S rRNA, where it nucleates assembly of the 50S subunit. In terms of biological role, one of the proteins that surrounds the polypeptide exit tunnel on the outside of the subunit. The sequence is that of Large ribosomal subunit protein uL24 from Leifsonia xyli subsp. xyli (strain CTCB07).